A 90-amino-acid polypeptide reads, in one-letter code: MTKASASLQDGFLNLLRRENIPATIYLVNGYQLKGYIRGFDNFTVAVEVDGRVQLVYKHALSTITPARPLPVSVSQIMRAGEGQEVEGEE.

A Sm domain is found at 10 to 70 (DGFLNLLRRE…LSTITPARPL (61 aa)).

This sequence belongs to the Hfq family. As to quaternary structure, homohexamer.

RNA chaperone that binds small regulatory RNA (sRNAs) and mRNAs to facilitate mRNA translational regulation in response to envelope stress, environmental stress and changes in metabolite concentrations. Also binds with high specificity to tRNAs. The protein is RNA-binding protein Hfq of Symbiobacterium thermophilum (strain DSM 24528 / JCM 14929 / IAM 14863 / T).